A 176-amino-acid chain; its full sequence is Heme oxygenase HutZ (176 aa).

Residue H170 coordinates heme.

This sequence belongs to the heme oxygenase HugZ/HutZ family. Homodimer. Interacts with HutX, leading to the transfer of the heme from HutX to apo-HutZ.

The enzyme catalyses heme b + 3 AH2 + 3 O2 + 2 H(+) = biliverdin IXbeta + CO + Fe(2+) + 3 A + 3 H2O. It carries out the reaction heme b + 3 AH2 + 3 O2 + 3 H(+) = biliverdin IXdelta + CO + Fe(2+) + 3 A + 3 H2O. With respect to regulation, activity is pH-dependent. A proximal hydrogen bond between Asp-132 and the heme axial ligant His-170 is essential for heme degradation activity. Heme-degradation reaction is inhibited by iron chelators. Involved in heme degradation. Catalyzes the degradation of heme to biliverdin, with the release of iron. Forms biliverdin beta and delta. Binds heme with high efficiency. In Vibrio cholerae serotype O1 (strain ATCC 39315 / El Tor Inaba N16961), this protein is Heme oxygenase HutZ.